Consider the following 1071-residue polypeptide: ATP-dependent helicase/deoxyribonuclease subunit B (1071 aa).

This sequence belongs to the helicase family. AddB/RexB type 2 subfamily. In terms of assembly, heterodimer of AddA and RexB. Mg(2+) is required as a cofactor.

The heterodimer acts as both an ATP-dependent DNA helicase and an ATP-dependent, dual-direction single-stranded exonuclease. Recognizes the chi site generating a DNA molecule suitable for the initiation of homologous recombination. This subunit has 5' -&gt; 3' nuclease activity but not helicase activity. The protein is ATP-dependent helicase/deoxyribonuclease subunit B of Streptococcus pyogenes serotype M3 (strain ATCC BAA-595 / MGAS315).